A 216-amino-acid chain; its full sequence is Large ribosomal subunit protein uL3 (216 aa).

Gln-157 bears the N5-methylglutamine mark.

This sequence belongs to the universal ribosomal protein uL3 family. In terms of assembly, part of the 50S ribosomal subunit. Forms a cluster with proteins L14 and L19. In terms of processing, methylated by PrmB.

Functionally, one of the primary rRNA binding proteins, it binds directly near the 3'-end of the 23S rRNA, where it nucleates assembly of the 50S subunit. This Stenotrophomonas maltophilia (strain R551-3) protein is Large ribosomal subunit protein uL3.